Consider the following 709-residue polypeptide: Probable serine/threonine-protein kinase zyg-1 (709 aa).

A Protein kinase domain is found at 13 to 251 (FQNLQQIGQG…LKEIVMTDYV (239 aa)). Residues 19–27 (IGQGGFGVV) and K41 contribute to the ATP site. Catalysis depends on D130, which acts as the Proton acceptor. Disordered stretches follow at residues 254-329 (KMGE…DRAR) and 591-633 (SSSQ…PAAT). 2 stretches are compositionally biased toward basic and acidic residues: residues 262-291 (SREHSRDSRSQRSREPFRSSRDGISLERRP) and 302-313 (SRRDPDGYRAAH). Residues 607-627 (PLSSRTTSSLNVRNGVSSDEN) are compositionally biased toward polar residues.

It belongs to the protein kinase superfamily. Ser/Thr protein kinase family.

Its subcellular location is the cytoplasm. The protein localises to the cytoskeleton. It localises to the microtubule organizing center. The protein resides in the centrosome. It is found in the centriole. It carries out the reaction L-seryl-[protein] + ATP = O-phospho-L-seryl-[protein] + ADP + H(+). The catalysed reaction is L-threonyl-[protein] + ATP = O-phospho-L-threonyl-[protein] + ADP + H(+). Its function is as follows. Protein kinase that plays a central role in centrosome duplication. Paternal copy is required to regulate synthesis of daughter centrioles prior to fertilization. Maternal copy regulates centrosome duplication during later cell cycles. Functions upstream of sas-5 and sas-6, and is required for their localization to the centrosome. The protein is Probable serine/threonine-protein kinase zyg-1 (zyg-1) of Caenorhabditis briggsae.